Consider the following 146-residue polypeptide: Snake venom vascular endothelial growth factor toxin (146 aa).

Positions 1–24 (MAAYLLAVAILFCIQGWPLGTVQG) are cleaved as a signal peptide. Gln-25 is subject to Pyrrolidone carboxylic acid. 3 disulfide bridges follow: Cys-38-Cys-80, Cys-69-Cys-115, and Cys-73-Cys-117. Residues 118–146 (RPRSASGVNSRKHKRNPEEGEQRAKFPFV) are disordered. A compositionally biased stretch (basic and acidic residues) spans 133–146 (NPEEGEQRAKFPFV).

Belongs to the PDGF/VEGF growth factor family. Snake venom VEGF subfamily. As to quaternary structure, homodimer; disulfide-linked. Interacts with VEGF receptor-1 (FLT1) with a high affinity, whereas it binds to VEGF receptor-2 (KDR) with a low affinity. Does not bind VEGF receptor-3 (FLT4). In terms of tissue distribution, expressed by the venom gland.

The protein resides in the secreted. Snake venom VEGFs that may contribute to venom dispersion and prey subjugation by inducing vascular permeability and hypotension. This protein induces an increase in capillary permeability after intradermal injection, as well as a drastic hypotensive effect after intravenous injection. The hypotension is mediated by nitric oxide (NO), which is produced by VEGF-activated endothelium NO synthase. Also induces angiogenesis in vitro. Like other crotalid VEGFs, this protein interacts with VEGF receptor-1 (FLT1) with a high affinity, whereas it binds to VEGF receptor-2 (KDR) with a low affinity. This Bothrops erythromelas (Caatinga lance head) protein is Snake venom vascular endothelial growth factor toxin.